A 355-amino-acid chain; its full sequence is uncharacterized protein (355 aa).

This sequence belongs to the TmcAL family.

This is an uncharacterized protein from Methanocaldococcus jannaschii (strain ATCC 43067 / DSM 2661 / JAL-1 / JCM 10045 / NBRC 100440) (Methanococcus jannaschii).